Reading from the N-terminus, the 400-residue chain is NADH-quinone oxidoreductase subunit D (400 aa).

It belongs to the complex I 49 kDa subunit family. NDH-1 is composed of 14 different subunits. Subunits NuoB, C, D, E, F, and G constitute the peripheral sector of the complex.

The protein resides in the cell inner membrane. The catalysed reaction is a quinone + NADH + 5 H(+)(in) = a quinol + NAD(+) + 4 H(+)(out). Functionally, NDH-1 shuttles electrons from NADH, via FMN and iron-sulfur (Fe-S) centers, to quinones in the respiratory chain. The immediate electron acceptor for the enzyme in this species is believed to be a menaquinone. Couples the redox reaction to proton translocation (for every two electrons transferred, four hydrogen ions are translocated across the cytoplasmic membrane), and thus conserves the redox energy in a proton gradient. This chain is NADH-quinone oxidoreductase subunit D, found in Chlorobaculum tepidum (strain ATCC 49652 / DSM 12025 / NBRC 103806 / TLS) (Chlorobium tepidum).